Here is a 209-residue protein sequence, read N- to C-terminus: Uracil phosphoribosyltransferase (209 aa).

5-phospho-alpha-D-ribose 1-diphosphate is bound by residues Arg79, Arg104, and 131-139 (DPMLATANS). Uracil is bound by residues Ile194 and 199-201 (GDA). Asp200 lines the 5-phospho-alpha-D-ribose 1-diphosphate pocket.

The protein belongs to the UPRTase family. The cofactor is Mg(2+).

It catalyses the reaction UMP + diphosphate = 5-phospho-alpha-D-ribose 1-diphosphate + uracil. Its pathway is pyrimidine metabolism; UMP biosynthesis via salvage pathway; UMP from uracil: step 1/1. With respect to regulation, allosterically activated by GTP. Catalyzes the conversion of uracil and 5-phospho-alpha-D-ribose 1-diphosphate (PRPP) to UMP and diphosphate. In Mesorhizobium japonicum (strain LMG 29417 / CECT 9101 / MAFF 303099) (Mesorhizobium loti (strain MAFF 303099)), this protein is Uracil phosphoribosyltransferase.